Consider the following 158-residue polypeptide: SsrA-binding protein (158 aa).

It belongs to the SmpB family.

The protein resides in the cytoplasm. Functionally, required for rescue of stalled ribosomes mediated by trans-translation. Binds to transfer-messenger RNA (tmRNA), required for stable association of tmRNA with ribosomes. tmRNA and SmpB together mimic tRNA shape, replacing the anticodon stem-loop with SmpB. tmRNA is encoded by the ssrA gene; the 2 termini fold to resemble tRNA(Ala) and it encodes a 'tag peptide', a short internal open reading frame. During trans-translation Ala-aminoacylated tmRNA acts like a tRNA, entering the A-site of stalled ribosomes, displacing the stalled mRNA. The ribosome then switches to translate the ORF on the tmRNA; the nascent peptide is terminated with the 'tag peptide' encoded by the tmRNA and targeted for degradation. The ribosome is freed to recommence translation, which seems to be the essential function of trans-translation. This Roseiflexus sp. (strain RS-1) protein is SsrA-binding protein.